Reading from the N-terminus, the 132-residue chain is Agouti-signaling protein (132 aa).

The first 22 residues, 1 to 22, serve as a signal peptide directing secretion; sequence MDVTRLLLATLLVFLCFFTAYS. N-linked (GlcNAc...) asparagine glycosylation is present at asparagine 39. The interval 61-87 is disordered; sequence QISRKEAEKKRSSKKEASMKKVARPRT. Residues 63–79 are compositionally biased toward basic and acidic residues; sequence SRKEAEKKRSSKKEASM. Cystine bridges form between cysteine 93-cysteine 108, cysteine 100-cysteine 114, cysteine 107-cysteine 125, cysteine 111-cysteine 132, and cysteine 116-cysteine 123. In terms of domain architecture, Agouti spans 93 to 132; that stretch reads CVTTRDSCKPPAPACCDPCASCQCRFFRSACSCRVLSLNC.

Its subcellular location is the secreted. Functionally, involved in the regulation of melanogenesis. The binding of ASP to MC1R precludes alpha-MSH initiated signaling and thus blocks production of cAMP, leading to a down-regulation of eumelanogenesis (brown/black pigment) and thus increasing synthesis of pheomelanin (yellow/red pigment). The protein is Agouti-signaling protein (ASIP) of Macaca silenus (Lion-tailed macaque).